Consider the following 512-residue polypeptide: 2,3-bisphosphoglycerate-independent phosphoglycerate mutase (512 aa).

Residues Asp12 and Ser62 each contribute to the Mn(2+) site. Ser62 acts as the Phosphoserine intermediate in catalysis. Substrate contacts are provided by residues His123, 153 to 154 (RD), Arg185, Arg191, 260 to 263 (RPDR), and Lys333. Residues Asp400, His404, Asp441, His442, and His460 each coordinate Mn(2+).

Belongs to the BPG-independent phosphoglycerate mutase family. In terms of assembly, monomer. The cofactor is Mn(2+).

It carries out the reaction (2R)-2-phosphoglycerate = (2R)-3-phosphoglycerate. The protein operates within carbohydrate degradation; glycolysis; pyruvate from D-glyceraldehyde 3-phosphate: step 3/5. Functionally, catalyzes the interconversion of 2-phosphoglycerate and 3-phosphoglycerate. The protein is 2,3-bisphosphoglycerate-independent phosphoglycerate mutase of Clostridium perfringens (strain ATCC 13124 / DSM 756 / JCM 1290 / NCIMB 6125 / NCTC 8237 / Type A).